The sequence spans 119 residues: Large ribosomal subunit protein uL18 (119 aa).

This sequence belongs to the universal ribosomal protein uL18 family. Part of the 50S ribosomal subunit; part of the 5S rRNA/L5/L18/L25 subcomplex. Contacts the 5S and 23S rRNAs.

Functionally, this is one of the proteins that bind and probably mediate the attachment of the 5S RNA into the large ribosomal subunit, where it forms part of the central protuberance. This Xylella fastidiosa (strain 9a5c) protein is Large ribosomal subunit protein uL18.